The primary structure comprises 142 residues: Peptide methionine sulfoxide reductase MsrB (142 aa).

The region spanning 2–125 is the MsrB domain; it reads LKKDKSELTD…NSAAIQFIPY (124 aa). Cysteine 114 (nucleophile) is an active-site residue.

Belongs to the MsrB Met sulfoxide reductase family.

The catalysed reaction is L-methionyl-[protein] + [thioredoxin]-disulfide + H2O = L-methionyl-(R)-S-oxide-[protein] + [thioredoxin]-dithiol. In Staphylococcus aureus (strain USA300), this protein is Peptide methionine sulfoxide reductase MsrB.